The sequence spans 159 residues: Phosphopantetheine adenylyltransferase (159 aa).

T10 provides a ligand contact to substrate. ATP is bound by residues 10–11 (TF) and H18. 3 residues coordinate substrate: K42, M74, and R88. ATP-binding positions include 89–91 (GLR), E99, and 124–130 (WSFISSS).

This sequence belongs to the bacterial CoaD family. Homohexamer. Mg(2+) is required as a cofactor.

Its subcellular location is the cytoplasm. It carries out the reaction (R)-4'-phosphopantetheine + ATP + H(+) = 3'-dephospho-CoA + diphosphate. The protein operates within cofactor biosynthesis; coenzyme A biosynthesis; CoA from (R)-pantothenate: step 4/5. In terms of biological role, reversibly transfers an adenylyl group from ATP to 4'-phosphopantetheine, yielding dephospho-CoA (dPCoA) and pyrophosphate. The protein is Phosphopantetheine adenylyltransferase of Yersinia enterocolitica serotype O:8 / biotype 1B (strain NCTC 13174 / 8081).